The primary structure comprises 400 residues: S-adenosylmethionine sensor upstream of mTORC1 (400 aa).

The S-adenosyl-L-methionine site is built by Arg99, Gly168, Asp186, Asp198, Phe199, and Ser240.

It belongs to the BMT2/SAMTOR family. As to quaternary structure, interacts with the GATOR1 complex; interaction is disrupted when samtor binds S-adenosyl-L-methionine. Interacts with the KICSTOR complex; interaction is disrupted when samtor binds S-adenosyl-L-methionine.

Its function is as follows. S-adenosyl-L-methionine-binding protein that acts as an inhibitor of mTORC1 signaling via interaction with the GATOR1 and KICSTOR complexes. Acts as a sensor of S-adenosyl-L-methionine to signal methionine sufficiency to mTORC1: in presence of methionine, binds S-adenosyl-L-methionine, leading to disrupt interaction with the GATOR1 and KICSTOR complexes and promote mTORC1 signaling. Upon methionine starvation, S-adenosyl-L-methionine levels are reduced, thereby promoting the association with GATOR1 and KICSTOR, leading to inhibit mTORC1 signaling. Probably also acts as a S-adenosyl-L-methionine-dependent methyltransferase. In Xenopus tropicalis (Western clawed frog), this protein is S-adenosylmethionine sensor upstream of mTORC1.